The following is a 293-amino-acid chain: Glutamyl-Q tRNA(Asp) synthetase (293 aa).

L-glutamate contacts are provided by residues 26 to 30 and Asp62; that span reads RFAPS. A 'HIGH' region motif is present at residues 29–39; sequence PSPTGLLHLGN. Positions 118, 120, 131, and 135 each coordinate Zn(2+). Tyr178 and Arg196 together coordinate L-glutamate. A 'KMSKS' region motif is present at residues 234 to 238; sequence KLSKR. Lys237 contacts ATP.

It belongs to the class-I aminoacyl-tRNA synthetase family. GluQ subfamily. Zn(2+) is required as a cofactor.

In terms of biological role, catalyzes the tRNA-independent activation of glutamate in presence of ATP and the subsequent transfer of glutamate onto a tRNA(Asp). Glutamate is transferred on the 2-amino-5-(4,5-dihydroxy-2-cyclopenten-1-yl) moiety of the queuosine in the wobble position of the QUC anticodon. The chain is Glutamyl-Q tRNA(Asp) synthetase from Synechococcus sp. (strain CC9605).